We begin with the raw amino-acid sequence, 895 residues long: Catenin alpha-3 (895 aa).

Positions 74–107 form a coiled coil; the sequence is EMIAKEATVLKEELAAALQEVRKESKALKVSAER. S160 bears the Phosphoserine mark. The stretch at 325–379 forms a coiled coil; the sequence is RERIIAECNAIRQALQDLLTEYMSNTGKTERSNTLNTAIVNMSKKTRDLRRQLRK. T361 is modified (phosphothreonine). The tract at residues 635–660 is disordered; the sequence is DVSDLEDDHEVRSHTSIQTEGKTDRA. Residues S637 and S647 each carry the phosphoserine modification. T649 carries the post-translational modification Phosphothreonine.

The protein belongs to the vinculin/alpha-catenin family. As to quaternary structure, interacts with CTNNB1. Interacts with PKP2. Expressed in heart (at protein level).

It is found in the cytoplasm. The protein localises to the cytoskeleton. Its subcellular location is the cell junction. It localises to the desmosome. In terms of biological role, may be involved in formation of stretch-resistant cell-cell adhesion complexes. The sequence is that of Catenin alpha-3 from Mus musculus (Mouse).